Here is a 754-residue protein sequence, read N- to C-terminus: Polycomb protein mes-3 (754 aa).

A disordered region spans residues 1 to 83; sequence MTPATAEVKV…PTKLENIQKT (83 aa). Residues 31-40 show a composition bias toward basic and acidic residues; sequence ARREEEKENL. Residues 51 to 61 are compositionally biased toward low complexity; sequence SSEAGSSRESS.

In terms of assembly, forms a heterotrimeric complex with the Polycomb proteins mes-2 and mes-3. Does not interact with mes-4. Interacts with nyfa-1. In adults, it is predominantly expressed in the germline, and weakly expressed in intestinal cells.

The protein resides in the nucleus. Functionally, component of a Polycomb group (PcG) complex. PcG proteins act by forming multiprotein complexes, which are required to maintain the transcriptionally repressive state of homeotic genes throughout development. In association with the nfya-1-NF-Y complex, may play a role in repressing the expression of the homeobox protein egl-5 in tissues such as the head. PcG proteins are not required to initiate repression, but to maintain it during later stages of development. The mes-2/mes-3/mes-6 complex may participate in the global inactivation of the X chromosomes in germline cells. The complex may act via methylation of histone H3 'Lys-27', rendering chromatin heritably changed in its expressibility. This complex is required to exclude mes-4 from the inactivated X-chromosomes in germline cells. The chain is Polycomb protein mes-3 from Caenorhabditis elegans.